The following is a 637-amino-acid chain: Neuroendocrine convertase 2 (637 aa).

Positions 1–24 are cleaved as a signal peptide; that stretch reads MEGGCGSQWKAAGFLFCVMVFASA. Positions 25–108 are excised as a propeptide; that stretch reads ERPVFTNHFL…QQEGFDRKKR (84 aa). One can recognise a Peptidase S8 domain in the interval 128–452; the sequence is QWYLFNTGQA…YGVLDAGAMV (325 aa). Catalysis depends on charge relay system residues Asp166 and His207. Disulfide bonds link Cys224/Cys375 and Cys316/Cys346. Asn374 carries N-linked (GlcNAc...) asparagine glycosylation. Ser383 (charge relay system) is an active-site residue. The P/Homo B domain maps to 460–596; it reads TVPERFHCVG…TLMLHGTQSA (137 aa). Cysteines 467 and 493 form a disulfide. Asn513 and Asn523 each carry an N-linked (GlcNAc...) asparagine glycan.

The protein belongs to the peptidase S8 family. Furin subfamily.

It is found in the cytoplasmic vesicle. The protein resides in the secretory vesicle. Its subcellular location is the secreted. It catalyses the reaction Release of protein hormones and neuropeptides from their precursors, generally by hydrolysis of -Lys-Arg-|- bonds.. Its function is as follows. Serine endopeptidase which is involved in the processing of hormone and other protein precursors at sites comprised of pairs of basic amino acid residues. Responsible for the release of glucagon from proglucagon in pancreatic A cells. This chain is Neuroendocrine convertase 2 (Pcsk2), found in Mus musculus (Mouse).